We begin with the raw amino-acid sequence, 416 residues long: Argininosuccinate synthase (416 aa).

Residues 19–27 (AYSGGLDTS) and A46 each bind ATP. Y97 and S102 together coordinate L-citrulline. An ATP-binding site is contributed by G127. 3 residues coordinate L-aspartate: T129, N133, and D134. N133 lines the L-citrulline pocket. L-citrulline-binding residues include R137, S188, S197, E273, and Y285.

This sequence belongs to the argininosuccinate synthase family. Type 1 subfamily. Homotetramer.

The protein resides in the cytoplasm. It carries out the reaction L-citrulline + L-aspartate + ATP = 2-(N(omega)-L-arginino)succinate + AMP + diphosphate + H(+). It participates in amino-acid biosynthesis; L-arginine biosynthesis; L-arginine from L-ornithine and carbamoyl phosphate: step 2/3. This chain is Argininosuccinate synthase, found in Granulibacter bethesdensis (strain ATCC BAA-1260 / CGDNIH1).